Consider the following 362-residue polypeptide: DNA replication and repair protein RecF (362 aa).

31 to 38 (GDNAAGKT) is a binding site for ATP.

This sequence belongs to the RecF family.

The protein localises to the cytoplasm. Functionally, the RecF protein is involved in DNA metabolism; it is required for DNA replication and normal SOS inducibility. RecF binds preferentially to single-stranded, linear DNA. It also seems to bind ATP. The sequence is that of DNA replication and repair protein RecF from Hydrogenovibrio crunogenus (strain DSM 25203 / XCL-2) (Thiomicrospira crunogena).